The sequence spans 358 residues: Peptide chain release factor 1 (358 aa).

Gln233 bears the N5-methylglutamine mark.

This sequence belongs to the prokaryotic/mitochondrial release factor family. Methylated by PrmC. Methylation increases the termination efficiency of RF1.

It is found in the cytoplasm. Peptide chain release factor 1 directs the termination of translation in response to the peptide chain termination codons UAG and UAA. This chain is Peptide chain release factor 1, found in Agathobacter rectalis (strain ATCC 33656 / DSM 3377 / JCM 17463 / KCTC 5835 / VPI 0990) (Eubacterium rectale).